Here is a 222-residue protein sequence, read N- to C-terminus: Sugar fermentation stimulation protein homolog (222 aa).

It belongs to the SfsA family.

In Thermotoga neapolitana (strain ATCC 49049 / DSM 4359 / NBRC 107923 / NS-E), this protein is Sugar fermentation stimulation protein homolog.